A 1181-amino-acid polypeptide reads, in one-letter code: WD repeat-containing protein 35 (1181 aa).

WD repeat units follow at residues 12–51, 69–108, 113–152, 154–193, and 502–539; these read PNNV…DDSK, GHSG…WYEE, RNKS…IWGK, LKGI…IMKM, and GTRD…LIQK.

In terms of assembly, component of the IFT complex A (IFT-A) complex. IFT-A complex is divided into a core subcomplex composed of IFT122:IFT140:WDR19 which is associated with TULP3 and a peripheral subcomplex composed of IFT43:WDR35:TTC21B. Interacts directy with IFT122, ITF43 and TTC21B. Interacts with IFT43. Interacts with CFAP61.

The protein localises to the cytoplasm. It localises to the cytoskeleton. Its subcellular location is the microtubule organizing center. It is found in the centrosome. The protein resides in the cilium axoneme. The protein localises to the cilium basal body. Functionally, as a component of the IFT complex A (IFT-A), a complex required for retrograde ciliary transport and entry into cilia of G protein-coupled receptors (GPCRs), it is involved in ciliogenesis and ciliary protein trafficking. May promote CASP3 activation and TNF-stimulated apoptosis. The protein is WD repeat-containing protein 35 of Mus musculus (Mouse).